The chain runs to 214 residues: Chalcone isomerase-like protein 1 (214 aa).

Belongs to the chalcone isomerase family. In terms of tissue distribution, mostly expressed in glandular trichomes (lupulin glands), and, to a lower extent, in cones, cones bracts, leaves, stems and roots.

The protein localises to the cytoplasm. It carries out the reaction a chalcone = a flavanone.. It functions in the pathway secondary metabolite biosynthesis; flavonoid biosynthesis. Its function is as follows. Involved in the biosynthesis of prenylated phenolics natural products which contribute to the bitter taste of beer and display broad biological activities. Involved in anthocyanin biosynthesis. Polyketide binding proteins (PBP) which reduces the catalytic activities of CHS_H1 and PT1L and prevents demethylxanthohumol (DMX) production, by binding to DMX and naringenin chalcone (NC) to stabilize the chalconoids ring-opened structure. The sequence is that of Chalcone isomerase-like protein 1 from Humulus lupulus (European hop).